The following is a 160-amino-acid chain: Probable chemoreceptor glutamine deamidase CheD (160 aa).

The protein belongs to the CheD family.

It catalyses the reaction L-glutaminyl-[protein] + H2O = L-glutamyl-[protein] + NH4(+). Probably deamidates glutamine residues to glutamate on methyl-accepting chemotaxis receptors (MCPs), playing an important role in chemotaxis. The protein is Probable chemoreceptor glutamine deamidase CheD of Desulfitobacterium hafniense (strain DSM 10664 / DCB-2).